A 206-amino-acid polypeptide reads, in one-letter code: Protein GrpE (206 aa).

Positions 1–17 (MSNESIKAEQDLIHEGV) are enriched in basic and acidic residues. The disordered stretch occupies residues 1–20 (MSNESIKAEQDLIHEGVESE).

This sequence belongs to the GrpE family. As to quaternary structure, homodimer.

Its subcellular location is the cytoplasm. In terms of biological role, participates actively in the response to hyperosmotic and heat shock by preventing the aggregation of stress-denatured proteins, in association with DnaK and GrpE. It is the nucleotide exchange factor for DnaK and may function as a thermosensor. Unfolded proteins bind initially to DnaJ; upon interaction with the DnaJ-bound protein, DnaK hydrolyzes its bound ATP, resulting in the formation of a stable complex. GrpE releases ADP from DnaK; ATP binding to DnaK triggers the release of the substrate protein, thus completing the reaction cycle. Several rounds of ATP-dependent interactions between DnaJ, DnaK and GrpE are required for fully efficient folding. This Shewanella oneidensis (strain ATCC 700550 / JCM 31522 / CIP 106686 / LMG 19005 / NCIMB 14063 / MR-1) protein is Protein GrpE.